The chain runs to 433 residues: Phosphomethylpyrimidine synthase 1 (433 aa).

Residues Met-95, Tyr-124, His-163, 185–187 (SRG), 226–229 (NAMR), and Glu-265 contribute to the substrate site. Zn(2+) is bound at residue His-269. Position 292 (Tyr-292) interacts with substrate. A Zn(2+)-binding site is contributed by His-333. [4Fe-4S] cluster is bound by residues Cys-408, Cys-411, and Cys-415.

This sequence belongs to the ThiC family. The cofactor is [4Fe-4S] cluster.

The catalysed reaction is 5-amino-1-(5-phospho-beta-D-ribosyl)imidazole + S-adenosyl-L-methionine = 4-amino-2-methyl-5-(phosphooxymethyl)pyrimidine + CO + 5'-deoxyadenosine + formate + L-methionine + 3 H(+). It participates in cofactor biosynthesis; thiamine diphosphate biosynthesis. Functionally, catalyzes the synthesis of the hydroxymethylpyrimidine phosphate (HMP-P) moiety of thiamine from aminoimidazole ribotide (AIR) in a radical S-adenosyl-L-methionine (SAM)-dependent reaction. This chain is Phosphomethylpyrimidine synthase 1, found in Methanothermobacter thermautotrophicus (strain ATCC 29096 / DSM 1053 / JCM 10044 / NBRC 100330 / Delta H) (Methanobacterium thermoautotrophicum).